Here is a 408-residue protein sequence, read N- to C-terminus: Potassium channel subfamily K member 13 (408 aa).

The Cytoplasmic segment spans residues 1–19; sequence MAGRGFSWGPGHLNEDNAR. Residues 20–40 traverse the membrane as a helical segment; that stretch reads FLLLAALIVLYLLGGAAVFSA. Asparagine 59 and asparagine 65 each carry an N-linked (GlcNAc...) asparagine glycan. Residues 95 to 115 constitute an intramembrane region (pore-forming); the sequence is WDFTGAFYFVGTVVSTIGFGM. 3 residues coordinate K(+): threonine 110, isoleucine 111, and glycine 112. Residues 110–115 form a selectivity filter 1 region; sequence TIGFGM. The chain crosses the membrane as a helical span at residues 125 to 145; sequence IFLIFYGLVGCSSTILFFNLF. Residues 146-193 lie on the Cytoplasmic side of the membrane; that stretch reads LERLITIIAYIMKSCHQRQLRRRGALPQESLKDAGQCEVDSLAGWKPS. A helical membrane pass occupies residues 194 to 214; it reads VYYVMLILCTASILISCCASA. The segment at residues 224–244 is an intramembrane region (pore-forming); that stretch reads YFDSLYFCFVAFSTIGFGDLV. K(+) is bound by residues threonine 237, isoleucine 238, glycine 239, and phenylalanine 240. The selectivity filter 2 stretch occupies residues 237–242; the sequence is TIGFGD. A helical transmembrane segment spans residues 263–283; that stretch reads VFILMGVCCIYSLFNVISILI. Over 284-408 the chain is Cytoplasmic; it reads KQSLNWILRK…NRLAETSGDR (125 aa).

This sequence belongs to the two pore domain potassium channel (TC 1.A.1.8) family. In terms of assembly, homodimer. Heterodimer with KCNK12. In terms of tissue distribution, expressed in microglia (at protein level).

The protein resides in the cell membrane. The enzyme catalyses K(+)(in) = K(+)(out). The channel conductance is activated by arachidonic acid and inhibited by Ba(2+) ions, volatile anesthetics such as halothane and antiarrhythmic drugs mexiletine and lidocaine. Insensitive to extracellular pH change. Functionally, k(+) channel that conducts outward rectifying tonic currents potentiated by purinergic signals. Homo- and heterodimerizes to form functional channels with distinct regulatory and gating properties. Contributes most of K(+) currents at the plasma membrane of resting microglia. Maintains a depolarized membrane potential required for proper ramified microglia morphology and phagocytosis, selectively mediating microglial pruning of presynaptic compartments at hippocampal excitatory synapses. Upon local release of ATP caused by neuronal injury or infection, it is potentiated by P2RY12 and P2RX7 receptor signaling and contributes to ATP-triggered K(+) efflux underlying microglial NLRP3 inflammasome assembly and IL1B release. In Homo sapiens (Human), this protein is Potassium channel subfamily K member 13.